The chain runs to 366 residues: MLSNSVNNNNNNNNINNSNSNNNDSNIHKNVKKLMVASIFGGIMSSLIVTPLDVVKTRLQTQNTGSHINQKHVFKGTLDAFKKIYKNEGPLTFWRGVTPSLLMTIPSATIYFTSYEYLKEYLYQFNDTEAYNIYTVPLVAGTLARIFSASVTSPFELLRTNSQGIVLQNAYKNTVAMAASSSTATIGTIPLSSEQRFNSFKLYRDIVNNVGIKGLWRGLGPTLVRDVPFSAIYWAGYEVLKNKLMKSQIDPNFSRNSKSPFFINFIAGATSGTLAAVLTTPIDVIKTRIQMSAQQTLSPSLTPQQQLDFIKKNNSSIYHLKQILSQEGWKGLTKGLVPRVAKVSPACAIMISTFEYIKQSHIADDN.

A compositionally biased stretch (low complexity) spans 1 to 25 (MLSNSVNNNNNNNNINNSNSNNNDS). The tract at residues 1–26 (MLSNSVNNNNNNNNINNSNSNNNDSN) is disordered. 3 Solcar repeats span residues 29–121 (KNVK…LKEY), 132–243 (NIYT…LKNK), and 259–360 (SPFF…IKQS). The next 6 helical transmembrane spans lie at 35–55 (MVAS…LDVV), 96–112 (GVTP…TIYF), 133–151 (IYTV…SASV), 175–192 (VAMA…IPLS), 262–282 (FINF…TTPI), and 340–357 (VAKV…FEYI).

The protein belongs to the mitochondrial carrier (TC 2.A.29) family.

Its subcellular location is the mitochondrion inner membrane. Mitochondrial transporter required for glutathione import into mitochondria. The protein is Mitochondrial substrate carrier family protein H of Dictyostelium discoideum (Social amoeba).